We begin with the raw amino-acid sequence, 299 residues long: 4-diphosphocytidyl-2-C-methyl-D-erythritol kinase (299 aa).

Lysine 11 is a catalytic residue. 94 to 104 (PQGGGLGGGSS) is an ATP binding site. Residue aspartate 136 is part of the active site.

Belongs to the GHMP kinase family. IspE subfamily.

The enzyme catalyses 4-CDP-2-C-methyl-D-erythritol + ATP = 4-CDP-2-C-methyl-D-erythritol 2-phosphate + ADP + H(+). It functions in the pathway isoprenoid biosynthesis; isopentenyl diphosphate biosynthesis via DXP pathway; isopentenyl diphosphate from 1-deoxy-D-xylulose 5-phosphate: step 3/6. In terms of biological role, catalyzes the phosphorylation of the position 2 hydroxy group of 4-diphosphocytidyl-2C-methyl-D-erythritol. In Bordetella bronchiseptica (strain ATCC BAA-588 / NCTC 13252 / RB50) (Alcaligenes bronchisepticus), this protein is 4-diphosphocytidyl-2-C-methyl-D-erythritol kinase.